Consider the following 179-residue polypeptide: Coatomer subunit zeta-2 (179 aa).

The protein belongs to the adaptor complexes small subunit family. As to quaternary structure, oligomeric complex that consists of at least the alpha, beta, beta', gamma, delta, epsilon and zeta subunits.

The protein localises to the cytoplasm. It is found in the golgi apparatus membrane. The protein resides in the cytoplasmic vesicle. It localises to the COPI-coated vesicle membrane. Its function is as follows. The coatomer is a cytosolic protein complex that binds to dilysine motifs and reversibly associates with Golgi non-clathrin-coated vesicles, which further mediate biosynthetic protein transport from the ER, via the Golgi up to the trans Golgi network. Coatomer complex is required for budding from Golgi membranes, and is essential for the retrograde Golgi-to-ER transport of dilysine-tagged proteins. The zeta subunit may be involved in regulating the coat assembly and, hence, the rate of biosynthetic protein transport due to its association-dissociation properties with the coatomer complex. The polypeptide is Coatomer subunit zeta-2 (Arabidopsis thaliana (Mouse-ear cress)).